Here is a 352-residue protein sequence, read N- to C-terminus: Inorganic triphosphatase (352 aa).

The region spanning 6–203 is the CYTH domain; it reads LQEIELKLAI…KRGYLLGSKQ (198 aa).

The enzyme catalyses triphosphate + H2O = phosphate + diphosphate. Involved in the hydrolysis of the beta-gamma-phosphoanhydride linkage of triphosphate-containing substrates (inorganic or nucleoside-linked). Catalyzes the hydrolysis of inorganic triphosphate (PPPi), which could be cytotoxic because of its high affinity for calcium ion, thereby interfering with calcium signaling. In Haemophilus influenzae (strain ATCC 51907 / DSM 11121 / KW20 / Rd), this protein is Inorganic triphosphatase.